The chain runs to 450 residues: Probable cysteine protease ATG4 (450 aa).

Cys122 (nucleophile) is an active-site residue. Catalysis depends on residues Asp297 and His299.

It belongs to the peptidase C54 family.

It is found in the cytoplasm. Its subcellular location is the nucleus. It localises to the preautophagosomal structure. It catalyses the reaction [protein]-C-terminal L-amino acid-glycyl-phosphatidylethanolamide + H2O = [protein]-C-terminal L-amino acid-glycine + a 1,2-diacyl-sn-glycero-3-phosphoethanolamine. Cysteine protease that plays a key role in cytoplasm to vacuole transport (Cvt) and autophagy by mediating both proteolytic activation and delipidation of ATG8. Required for selective autophagic degradation of the nucleus (nucleophagy) as well as for mitophagy which contributes to regulate mitochondrial quantity and quality by eliminating the mitochondria to a basal level to fulfill cellular energy requirements and preventing excess ROS production. The protease activity is required for proteolytic activation of ATG8: cleaves the C-terminal amino acid of ATG8 to reveal a C-terminal glycine. ATG8 ubiquitin-like activity requires the exposure of the glycine at the C-terminus for its conjugation to phosphatidylethanolamine (PE) and its insertion to membranes, which is necessary for autophagy. The ATG8-PE conjugate mediates tethering between adjacent membranes and stimulates membrane hemifusion, leading to expansion of the autophagosomal membrane during autophagy. In addition to the protease activity, also catalyzes deconjugation of PE-conjugated forms of ATG8 during macroautophagy: ATG8 delipidation is required to release the protein from membranes, which facilitates multiple events during macroautophagy, and especially for efficient autophagosome biogenesis, the assembly of ATG9-containing tubulovesicular clusters into phagophores/autophagosomes, and for the disassembly of PAS-associated ATG components. ATG8 delipidation by ATG4 also recycles ATG8-PE generated on inappropriate membranes to maintain a reservoir of unlipidated ATG8 that is required for autophagosome formation at the PAS. This Kluyveromyces lactis (strain ATCC 8585 / CBS 2359 / DSM 70799 / NBRC 1267 / NRRL Y-1140 / WM37) (Yeast) protein is Probable cysteine protease ATG4 (ATG4).